We begin with the raw amino-acid sequence, 217 residues long: 3,4-dihydroxy-2-butanone 4-phosphate synthase (217 aa).

D-ribulose 5-phosphate is bound by residues 37-38 (RE), aspartate 42, 150-154 (RRGHT), and glutamate 174. Glutamate 38 is a Mg(2+) binding site. Histidine 153 is a binding site for Mg(2+).

It belongs to the DHBP synthase family. In terms of assembly, homodimer. The cofactor is Mg(2+). Mn(2+) is required as a cofactor.

It carries out the reaction D-ribulose 5-phosphate = (2S)-2-hydroxy-3-oxobutyl phosphate + formate + H(+). It participates in cofactor biosynthesis; riboflavin biosynthesis; 2-hydroxy-3-oxobutyl phosphate from D-ribulose 5-phosphate: step 1/1. Functionally, catalyzes the conversion of D-ribulose 5-phosphate to formate and 3,4-dihydroxy-2-butanone 4-phosphate. The sequence is that of 3,4-dihydroxy-2-butanone 4-phosphate synthase from Shewanella sediminis (strain HAW-EB3).